The primary structure comprises 143 residues: Large ribosomal subunit protein uL11 (143 aa).

The protein belongs to the universal ribosomal protein uL11 family. As to quaternary structure, part of the ribosomal stalk of the 50S ribosomal subunit. Interacts with L10 and the large rRNA to form the base of the stalk. L10 forms an elongated spine to which L12 dimers bind in a sequential fashion forming a multimeric L10(L12)X complex. In terms of processing, one or more lysine residues are methylated.

Functionally, forms part of the ribosomal stalk which helps the ribosome interact with GTP-bound translation factors. The sequence is that of Large ribosomal subunit protein uL11 from Saccharophagus degradans (strain 2-40 / ATCC 43961 / DSM 17024).